The chain runs to 267 residues: Undecaprenyl-diphosphatase (267 aa).

8 helical membrane passes run 1–21 (MSELQIVVLALIQGLTEFLPI), 39–59 (QGLAFDLILNIGTLSAVLIYF), 87–107 (WWILWSTIPAALIGFFGKSLV), 113–133 (SGYVIAVTTTVFGLLLWWADA), 144–164 (TGLKGALFIGFAQVLALIPGT), 189–209 (FLMSIPIIAMASGYDLLKFIL), 219–239 (LFLGAGISFVSAILCIHVFLI), and 244–264 (VGMMPFVIYRLLLGGFLFYIL).

It belongs to the UppP family.

It localises to the cell inner membrane. The enzyme catalyses di-trans,octa-cis-undecaprenyl diphosphate + H2O = di-trans,octa-cis-undecaprenyl phosphate + phosphate + H(+). Functionally, catalyzes the dephosphorylation of undecaprenyl diphosphate (UPP). Confers resistance to bacitracin. This Psychromonas ingrahamii (strain DSM 17664 / CCUG 51855 / 37) protein is Undecaprenyl-diphosphatase.